A 436-amino-acid polypeptide reads, in one-letter code: F-box/LRR-repeat protein 20 (436 aa).

Residues 22–68 enclose the F-box domain; it reads AVINKKLPKELLLRIFSFLDVVTLCRCAQVSRAWNVLALDGSNWQRI. LRR repeat units follow at residues 74-100, 101-126, 127-152, 153-178, 179-204, 205-230, 231-256, 257-282, 283-308, 309-334, 335-363, 364-388, and 389-414; these read QRDI…SLRG, CLGV…NLNG, CTKT…DLAS, CTSI…NISW, CDQV…FLKG, CTQL…NLQT, CLQI…CASG, CSNI…EVAR, CSQL…DLEE, CVQI…SLSH, CELI…ELDN, CPLI…ELYD, and CQQI…AYFA. Phosphothreonine is present on Thr-417. Ser-421 is modified (phosphoserine).

As to quaternary structure, interacts with SKP1 and CUL1.

It localises to the cytoplasm. In terms of biological role, substrate-recognition component of the SCF (SKP1-CUL1-F-box protein)-type E3 ubiquitin ligase complex. Role in neural transmission. The chain is F-box/LRR-repeat protein 20 (FBXL20) from Bos taurus (Bovine).